A 362-amino-acid chain; its full sequence is S-adenosylmethionine:tRNA ribosyltransferase-isomerase (362 aa).

Belongs to the QueA family. In terms of assembly, monomer.

The protein localises to the cytoplasm. The enzyme catalyses 7-aminomethyl-7-carbaguanosine(34) in tRNA + S-adenosyl-L-methionine = epoxyqueuosine(34) in tRNA + adenine + L-methionine + 2 H(+). It participates in tRNA modification; tRNA-queuosine biosynthesis. Functionally, transfers and isomerizes the ribose moiety from AdoMet to the 7-aminomethyl group of 7-deazaguanine (preQ1-tRNA) to give epoxyqueuosine (oQ-tRNA). The chain is S-adenosylmethionine:tRNA ribosyltransferase-isomerase from Syntrophus aciditrophicus (strain SB).